A 293-amino-acid polypeptide reads, in one-letter code: Outer membrane protein assembly factor BamD (293 aa).

Positions 1 to 26 (MIQRPTFFSPIHLLAVLLATFILITG) are cleaved as a signal peptide. Cys27 carries the N-palmitoyl cysteine lipid modification. Cys27 carries the S-diacylglycerol cysteine lipid modification.

It belongs to the BamD family. As to quaternary structure, part of the Bam complex.

The protein resides in the cell outer membrane. Part of the outer membrane protein assembly complex, which is involved in assembly and insertion of beta-barrel proteins into the outer membrane. This chain is Outer membrane protein assembly factor BamD, found in Xylella fastidiosa (strain Temecula1 / ATCC 700964).